The primary structure comprises 389 residues: Basigin (389 aa).

Positions 1 to 21 (MAAALLLALAFTLLSGQGACA) are cleaved as a signal peptide. Over 22 to 325 (AAGFLKAPLS…ETISLRVRSR (304 aa)) the chain is Extracellular. Positions 37 to 120 (GGSVVLHCEA…SSDPDRNHLT (84 aa)) constitute an Ig-like domain. 3 cysteine pairs are disulfide-bonded: Cys44–Cys108, Cys157–Cys203, and Cys242–Cys305. The Ig-like C2-type domain occupies 138 to 219 (EPGTIQTSVQ…VGRSEINVEG (82 aa)). N-linked (GlcNAc...) asparagine glycosylation is found at Asn160, Asn270, and Asn306. Residues 221–319 (PRIKVGKKSE…AQGTTRETIS (99 aa)) enclose the Ig-like V-type domain. Residues 326–349 (MAALWPFLGIVAEVLVLVTIIFIY) form a helical membrane-spanning segment. Over 350-389 (EKRRKPDQTLDEDDPGAAPLKGSGTHMNDKDKNVRQRNAT) the chain is Cytoplasmic. A disordered region spans residues 356–389 (DQTLDEDDPGAAPLKGSGTHMNDKDKNVRQRNAT). Phosphothreonine is present on Thr358. The residue at position 372 (Ser372) is a Phosphoserine.

Interacts with NXNL1. Interacts with SLC2A1 and SLC16A1/GLUT1. Interacts with XKR8; promoting its localization at the cell membrane. As to quaternary structure, interacts with ATP1B2, MAG and L1CAM. Interacts with SLC16A7. Interacts with VEGFA, KDR/VEGFR2, PPIA/CYPA, SLC1A3, SLC16A11 and SLC16A12. Interacts with PPIL2; regulates BSG transport to the cell membrane. Interacts with SLC16A1; interaction mediates SLC16A1 targeting to the plasma membrane. Interacts with SLC16A3; interaction mediates SLC16A3 targeting to the plasma membrane. In terms of assembly, interacts with SLC16A6; this interaction mediates targeting to the plasma membrane. N-glycosylated. Post-translationally, N-glycosylated. During spermatogenesis, probably deglycosylated during epididymal transit. As to expression, retina-specific. Expressed in both rods and cones (at protein level). In terms of tissue distribution, testis and caput, corpus and cauda epididymides (at protein level). Expressed in the brain, lung, liver, kidney, heart, spleen, uterus, retina and skeletal muscle.

Its subcellular location is the cell membrane. The protein resides in the photoreceptor inner segment. The protein localises to the cell projection. It localises to the cilium. It is found in the photoreceptor outer segment. Its subcellular location is the endoplasmic reticulum membrane. The protein resides in the basolateral cell membrane. Its function is as follows. Essential for normal retinal maturation and development. Acts as a retinal cell surface receptor for NXNL1 and plays an important role in NXNL1-mediated survival of retinal cone photoreceptors. In association with glucose transporter SLC16A1/GLUT1 and NXNL1, promotes retinal cone survival by enhancing aerobic glycolysis and accelerating the entry of glucose into photoreceptors. Signaling receptor for cyclophilins, essential for PPIA/CYPA and PPIB/CYPB-dependent signaling related to chemotaxis and adhesion of immune cells. Plays an important role in targeting the monocarboxylate transporters SLC16A1, SLC16A3 and SLC16A8 to the plasma membrane. Acts as a coreceptor for vascular endothelial growth factor receptor 2 (KDR/VEGFR2) in endothelial cells enhancing its VEGFA-mediated activation and downstream signaling. Promotes angiogenesis through EPAS1/HIF2A-mediated up-regulation of VEGFA and KDR/VEGFR2 in endothelial cells. Plays an important role in spermatogenesis; mediates interactions between germ cells and Sertoli cell and is essential for the development/differentiation of germ cells to round spermatids. This Mus musculus (Mouse) protein is Basigin (Bsg).